The primary structure comprises 666 residues: Endogenous retrovirus group K member 21 Gag polyprotein (666 aa).

Gly-2 carries the N-myristoyl glycine lipid modification. 2 disordered regions span residues 165–189 and 217–264; these read GKGP…AGQV and ELQY…GSEL. Residues 232–247 show a composition bias toward pro residues; sequence GMPPAPQGRAPYPQPP. 2 CCHC-type zinc fingers span residues 544–561 and 580–597; these read GKCY…NCPV and DLCP…QCRS. The segment at 598–641 is disordered; that stretch reads KFDKNGQPLSGNEQRGQPQAPQQTGAFPIQPFVPQGFQGQQPPL. Residues 604–622 show a composition bias toward polar residues; it reads QPLSGNEQRGQPQAPQQTG. Residues 624–640 show a composition bias toward low complexity; it reads FPIQPFVPQGFQGQQPP.

It belongs to the beta type-B retroviral Gag protein family. HERV class-II K(HML-2) gag subfamily. In terms of processing, myristoylation is essential for retroviral assembly. Alteration of the glycine residue leads to a block in the budding of particles and an accumulation of Gag inside the cell. Specific enzymatic cleavages may yield mature proteins.

It localises to the cell membrane. Its function is as follows. The products of the Gag polyproteins of infectious retroviruses perform highly complex orchestrated tasks during the assembly, budding, maturation, and infection stages of the viral replication cycle. During viral assembly, the proteins form membrane associations and self-associations that ultimately result in budding of an immature virion from the infected cell. Gag precursors also function during viral assembly to selectively bind and package two plus strands of genomic RNA. Endogenous Gag proteins may have kept, lost or modified their original function during evolution. This chain is Endogenous retrovirus group K member 21 Gag polyprotein (ERVK-21), found in Homo sapiens (Human).